Here is a 634-residue protein sequence, read N- to C-terminus: Chaperone protein DnaK (634 aa).

Thr199 is modified (phosphothreonine; by autocatalysis). Positions 601 to 618 are enriched in low complexity; sequence AAAGQAQAESGAGAQGNA. Positions 601–634 are disordered; it reads AAAGQAQAESGAGAQGNAKPDDVVDAEFEEVDKK. Residues 623–634 are compositionally biased toward acidic residues; the sequence is VVDAEFEEVDKK.

The protein belongs to the heat shock protein 70 family.

Acts as a chaperone. The polypeptide is Chaperone protein DnaK (Acidithiobacillus ferrooxidans (strain ATCC 23270 / DSM 14882 / CIP 104768 / NCIMB 8455) (Ferrobacillus ferrooxidans (strain ATCC 23270))).